The sequence spans 242 residues: Floral homeotic protein AGAMOUS (242 aa).

The MADS-box domain occupies 19–73 (RGKIEIKRIENTTNRQVTFCKRRNGLLKKAYELSVLCDAEVALIVFSTRGRLYEY). Positions 103 to 193 (AQFYQQEASK…RAKIAENERA (91 aa)) constitute a K-box domain.

Flower. Preferentially expressed in stamen and carpel and weakly in petal. Undetected in leaves and roots.

Its subcellular location is the nucleus. In terms of biological role, probable transcription factor involved in regulating genes that determines stamen and carpel development in wild-type flowers. This is Floral homeotic protein AGAMOUS (AG2) from Panax ginseng (Korean ginseng).